Consider the following 504-residue polypeptide: Alpha,alpha-trehalose-phosphate synthase [UDP-forming] (504 aa).

2 residues coordinate D-glucose 6-phosphate: Y97 and D151. R287 and K292 together coordinate UDP. UDP-alpha-D-glucose contacts are provided by R287 and K292. R325 lines the D-glucose 6-phosphate pocket. 386–394 (DGMNLVSYE) is a binding site for UDP-alpha-D-glucose. A UDP-binding site is contributed by 390 to 394 (LVSYE). The segment at 482–504 (AGKLPTKETPVNGETSKLETSSQ) is disordered. The segment covering 493-504 (NGETSKLETSSQ) has biased composition (polar residues).

The protein belongs to the glycosyltransferase 20 family.

The catalysed reaction is D-glucose 6-phosphate + UDP-alpha-D-glucose = alpha,alpha-trehalose 6-phosphate + UDP + H(+). It functions in the pathway carbohydrate biosynthesis. In terms of biological role, synthase catalytic subunit of the trehalose synthase complex that catalyzes the production of trehalose from glucose-6-phosphate and UDP-alpha-D-glucose in a two step process. This chain is Alpha,alpha-trehalose-phosphate synthase [UDP-forming] (tpsA), found in Emericella nidulans (strain FGSC A4 / ATCC 38163 / CBS 112.46 / NRRL 194 / M139) (Aspergillus nidulans).